We begin with the raw amino-acid sequence, 486 residues long: BTB/POZ domain and ankyrin repeat-containing protein BOP (486 aa).

In terms of domain architecture, BTB spans 25–115 (SDVTFSVEGR…LYSGQVSIVP (91 aa)). The segment at 121–135 (RPNCGERGCWHTHCS) adopts a C2HC NPR-type zinc-finger fold. Zn(2+) contacts are provided by Cys-124, Cys-129, His-131, and Cys-134. ANK repeat units follow at residues 257 to 286 (QKIRRMRRALDSSDVELVKLMVMGEGLNLD), 287 to 316 (EALALHYAVENCSREVAKALLELGAADVNY), 321 to 350 (AGKTPLHIAAEMVSPDMVAVLLDHHADPNV), and 354 to 388 (DNVTPLDILRTLTSDFLFKGAIPGLTHIEPNKLRL). Disordered regions lie at residues 403–442 (EEGNANNNPPSSTTTTLPMYHHPMNDDHNSSSSSGNNHNI) and 464–486 (QMSDDHGGRHGDPAMYHHSHHDY). Composition is skewed to low complexity over residues 406–418 (NANNNPPSSTTTT) and 432–442 (SSSSSGNNHNI). Residues 466 to 475 (SDDHGGRHGD) are compositionally biased toward basic and acidic residues.

It belongs to the plant 'ANKYRIN-BTB/POZ' family. 'NOOT-BOP-COCH-like' (NBCL) subfamily. Homodimer. As to expression, expressed in xylem vessels and parenchyma cells of pedicel vascular tissue in the abscission zone (AZ). Accumulates in developing root nodules and present in roots, especially in the upper part.

It localises to the nucleus. It is found in the cytoplasm. The protein localises to the cell membrane. Its pathway is protein modification; protein ubiquitination. Its function is as follows. May act as a substrate-specific adapter of an E3 ubiquitin-protein ligase complex (CUL3-RBX1-BTB) which mediates the ubiquitination and subsequent proteasomal degradation of target proteins. Transcriptional co-regulator involved in promoting the fate and determination of leaf and flower meristems. Required for the abscission of senescent organs, probably by regulating the cell wall disorganization in abscission zones (AZs, e.g. pulvini at the base of leaves). Involved in the coordination of the symbiotic nodule developmental program; promotes the formation of root nodules by interacting directly with APP1 to modulate the expression of the nuclear transcription factor Y subunit (NF-YA1), a key nodulin. Necessary for the robust maintenance of nodule identity throughout the nodule developmental program. The polypeptide is BTB/POZ domain and ankyrin repeat-containing protein BOP (Lupinus luteus (European yellow lupine)).